The following is a 500-amino-acid chain: Intracellular exo-alpha-(1-&gt;5)-L-arabinofuranosidase 1 (500 aa).

Alpha-L-arabinofuranose contacts are provided by glutamate 27, asparagine 72, and asparagine 172. The Proton donor/acceptor role is filled by glutamate 173. 3 residues coordinate alpha-L-arabinofuranose: tyrosine 244, glutamate 292, and glutamine 349. Glutamate 292 serves as the catalytic Nucleophile.

The protein belongs to the glycosyl hydrolase 51 family. As to quaternary structure, homohexamer; trimer of dimers.

It is found in the cytoplasm. The catalysed reaction is Hydrolysis of terminal non-reducing alpha-L-arabinofuranoside residues in alpha-L-arabinosides.. It carries out the reaction (20S)-ginsenoside Rc + H2O = L-arabinofuranose + (20S)-ginsenoside Rd. The protein operates within glycan metabolism; L-arabinan degradation. With respect to regulation, at a concentration of 5 mM, K(+), Cu(2+) and Ni(2+) exhibit inhibitory effects on the activity. Additionally, the chemical reagent SDS also displays a certain degree of inhibition. Enzymatic activity is largely unaffected by product feedback inhibition. Functionally, involved in the degradation of arabinan and is a key enzyme in the complete degradation of the plant cell wall. Catalyzes the cleavage of terminal alpha-(1-&gt;5)-arabinofuranosyl bonds in different hemicellulosic homopolysaccharides (branched and debranched arabinans). It acts preferentially on arabinotriose, arabinobiose and linear alpha-(1-&gt;5)-L-arabinan, and is much less effective on branched sugar beet arabinan. When expressed in E.coli, the recombinant enyzme can hydrolyze, with relatively low catalytic efficiency, the terminal alpha-L-arabinofuranoside at the C20 position of ginsenoside Rc to produce ginsenoside Rd, a rare ginsenoside that exhibits diverse and powerful pharmacological activities. This chain is Intracellular exo-alpha-(1-&gt;5)-L-arabinofuranosidase 1, found in Bacillus subtilis (strain 168).